The following is a 457-amino-acid chain: Cysteine--tRNA ligase (457 aa).

Residue Cys-28 coordinates Zn(2+). A 'HIGH' region motif is present at residues 30 to 40 (MTVYDLCHIGH). Cys-209, His-234, and Glu-238 together coordinate Zn(2+). A 'KMSKS' region motif is present at residues 266–270 (KMSKS). Lys-269 is a binding site for ATP.

It belongs to the class-I aminoacyl-tRNA synthetase family. As to quaternary structure, monomer. The cofactor is Zn(2+).

Its subcellular location is the cytoplasm. The enzyme catalyses tRNA(Cys) + L-cysteine + ATP = L-cysteinyl-tRNA(Cys) + AMP + diphosphate. The protein is Cysteine--tRNA ligase of Chromobacterium violaceum (strain ATCC 12472 / DSM 30191 / JCM 1249 / CCUG 213 / NBRC 12614 / NCIMB 9131 / NCTC 9757 / MK).